Consider the following 589-residue polypeptide: V-type ATP synthase alpha chain 1 (589 aa).

Residue 239-246 (GPFGAGKT) participates in ATP binding.

It belongs to the ATPase alpha/beta chains family.

The enzyme catalyses ATP + H2O + 4 H(+)(in) = ADP + phosphate + 5 H(+)(out). In terms of biological role, produces ATP from ADP in the presence of a proton gradient across the membrane. The V-type alpha chain is a catalytic subunit. This is V-type ATP synthase alpha chain 1 (atpA1) from Treponema pallidum (strain Nichols).